The chain runs to 100 residues: Small ribosomal subunit protein uS14c (100 aa).

This sequence belongs to the universal ribosomal protein uS14 family. As to quaternary structure, part of the 30S ribosomal subunit.

The protein localises to the plastid. Its subcellular location is the chloroplast. Binds 16S rRNA, required for the assembly of 30S particles. The sequence is that of Small ribosomal subunit protein uS14c from Chlamydomonas reinhardtii (Chlamydomonas smithii).